A 175-amino-acid chain; its full sequence is NADH-ubiquinone oxidoreductase chain 6 (175 aa).

5 helical membrane-spanning segments follow: residues 1 to 21 (MMLY…VGFS), 25 to 45 (SPIY…GIVL), 47 to 67 (FGGS…MMVV), 88 to 108 (AVLG…YYVL), and 149 to 169 (YGTW…VVIM).

Belongs to the complex I subunit 6 family. In terms of assembly, core subunit of respiratory chain NADH dehydrogenase (Complex I) which is composed of 45 different subunits.

The protein resides in the mitochondrion inner membrane. It carries out the reaction a ubiquinone + NADH + 5 H(+)(in) = a ubiquinol + NAD(+) + 4 H(+)(out). Functionally, core subunit of the mitochondrial membrane respiratory chain NADH dehydrogenase (Complex I) which catalyzes electron transfer from NADH through the respiratory chain, using ubiquinone as an electron acceptor. Essential for the catalytic activity and assembly of complex I. The sequence is that of NADH-ubiquinone oxidoreductase chain 6 (MT-ND6) from Bos indicus (Zebu).